The primary structure comprises 547 residues: Malolactic enzyme (547 aa).

The active-site Proton donor is Tyr-92. The active-site Proton acceptor is Lys-165. Lys-165 is a binding site for substrate. Mn(2+) is bound by residues Glu-236, Asp-237, and Asp-260. NAD(+) is bound by residues 293–296 (AGTA), Asn-405, and Asn-450. Asn-450 serves as a coordination point for substrate.

This sequence belongs to the malic enzymes family. Homodimer. Mn(2+) serves as cofactor. The cofactor is NAD(+).

It catalyses the reaction (S)-malate + H(+) = (S)-lactate + CO2. In terms of biological role, involved in the malolactic fermentation (MLF) of wine, which results in a natural decrease in acidity and favorable changes in wine flavors. Catalyzes the decarboxylation of L-malate to L-lactate. This Lactiplantibacillus plantarum (strain ATCC BAA-793 / NCIMB 8826 / WCFS1) (Lactobacillus plantarum) protein is Malolactic enzyme.